Consider the following 434-residue polypeptide: Ribosomal RNA-processing protein 14 (434 aa).

Position 2 is an N-acetylserine (Ser-2). Composition is skewed to basic and acidic residues over residues 32–58, 70–79, and 95–105; these read KSQE…LDPE, VMKKKEKDAK, and KQKEATSKVEG. Residues 32-257 are disordered; it reads KSQEQWKAKK…RFKKGKKDSE (226 aa). Residues 121-140 show a composition bias toward acidic residues; the sequence is PDEDEEEEEDIKVIFDDEGN. The span at 144–178 shows a compositional bias: basic and acidic residues; sequence LESKKDTTEPDRSVEKKSITEEEKLQRKKNLEALR. Coiled-coil stretches lie at residues 162-230 and 293-360; these read ITEE…EIAS and AKND…QKRK. A compositionally biased stretch (acidic residues) spans 220-241; the sequence is EQEQDQDEIASDSDMEDIDSDL. The segment covering 375–392 has biased composition (basic and acidic residues); sequence TISERQKRREENLRIRKD. Residues 375-434 form a disordered region; sequence TISERQKRREENLRIRKDNKGKKRNKQEKMKRKYVGSAVPKKRAGFEGRLKTGKKKGGPK. Composition is skewed to basic residues over residues 393–408 and 425–434; these read NKGK…KRKY and KTGKKKGGPK.

It belongs to the SURF6 family. In terms of assembly, component of the 90S and 60S pre-ribosomal particles.

It localises to the nucleus. Its subcellular location is the nucleolus. Its function is as follows. Involved in ribosome biogenesis and cell polarity. Required for the synthesis of both 40S and 60S ribosomal subunits and may also play some direct role in correct positioning of the mitotic spindle during mitosis. The sequence is that of Ribosomal RNA-processing protein 14 (RRP14) from Saccharomyces cerevisiae (strain ATCC 204508 / S288c) (Baker's yeast).